Reading from the N-terminus, the 519-residue chain is Cytochrome P450 monooxygenase apdE (519 aa).

Residues 27–47 (FVFFAFVVYSCFTIAVGWVVY) traverse the membrane as a helical segment. N327 and N379 each carry an N-linked (GlcNAc...) asparagine glycan. C466 is a heme binding site. An N-linked (GlcNAc...) asparagine glycan is attached at N508.

This sequence belongs to the cytochrome P450 family. Heme serves as cofactor.

The protein resides in the membrane. It functions in the pathway secondary metabolite biosynthesis. Its function is as follows. Cytochrome P450 monooxygenase; part of the gene cluster that mediates the biosynthesis of aspyridones. The polyketide-amino acid backbone preaspyridone A is first assembled by the PKS-NRPS hybrid apdA. The assembly of preaspyridone A is initiated by loading of malonyl-CoA onto apdA, followed by decarboxylation to yield the acetyl starter unit. The growing polyketide chain then elongates into a tetraketide. The adpA PKS module catalyzes three Claisen condensations, as well as beta-keto processing and methylation. Alpha-methylation step during polyketide synthesis is a prerequisite and a key checkpoint for chain transfer between PKS and NRPS modules. The downstream NRPS module contains the condensation (C), adenylation (A), and thiolation (T) domains and catalyzes the incorporation of tyrosine via the formation of the L-tyrosinyl-thioester and the amide linkage between L-tyrosinyl-thioester and the tetraketide. The bimodular assembly line is terminated with a reductase (R) domain that facilitates formation and release of the tetramic acid product. Because apdA lacks a designated enoylreductase (ER) domain, the required activity is provided the enoyl reductase apdC. ApdC appears to operate with different stereoselectivity in different PKS cycle. Combined with apdC, apdA is proposed to synthesize preaspyridone A via about 20 enzymatic steps. A number of oxidative steps performed successively by the cytochrome P450 monooxygenases apdE and apdB are required for the conversion of preaspyridone A to aspyridone A. The cytochrome P450 monooxygenase apdE is responsible for the oxidative dephenylation of preaspyridone A. Finally, the predicted FAD-dependent monooxygenase apdD and the acyl-CoA dehydrogenase apdG may be involved in the transformation of aspyridone A into aspyridone B. This chain is Cytochrome P450 monooxygenase apdE, found in Emericella nidulans (strain FGSC A4 / ATCC 38163 / CBS 112.46 / NRRL 194 / M139) (Aspergillus nidulans).